The chain runs to 508 residues: Arabinose import ATP-binding protein AraG (508 aa).

ABC transporter domains are found at residues 5–240 (LEFQ…MVGR) and 250–496 (ARTL…LPDA). 37–44 (GENGAGKS) is an ATP binding site.

The protein belongs to the ABC transporter superfamily. Arabinose importer (TC 3.A.1.2.2) family. In terms of assembly, the complex is composed of two ATP-binding proteins (AraG), two transmembrane proteins (AraH) and a solute-binding protein (AraF).

The protein localises to the cell inner membrane. It carries out the reaction L-arabinose(out) + ATP + H2O = L-arabinose(in) + ADP + phosphate + H(+). Its function is as follows. Part of the ABC transporter complex AraFGH involved in arabinose import. Responsible for energy coupling to the transport system. This chain is Arabinose import ATP-binding protein AraG, found in Rhizobium meliloti (strain 1021) (Ensifer meliloti).